A 429-amino-acid chain; its full sequence is 3-phosphoshikimate 1-carboxyvinyltransferase (429 aa).

3-phosphoshikimate contacts are provided by K23, S24, and R28. Residue K23 coordinates phosphoenolpyruvate. The phosphoenolpyruvate site is built by G95 and R123. 3-phosphoshikimate is bound by residues S168, Q170, D316, and K343. A phosphoenolpyruvate-binding site is contributed by Q170. D316 functions as the Proton acceptor in the catalytic mechanism. Residues R347 and R389 each contribute to the phosphoenolpyruvate site.

Belongs to the EPSP synthase family. In terms of assembly, monomer.

It is found in the cytoplasm. It catalyses the reaction 3-phosphoshikimate + phosphoenolpyruvate = 5-O-(1-carboxyvinyl)-3-phosphoshikimate + phosphate. The protein operates within metabolic intermediate biosynthesis; chorismate biosynthesis; chorismate from D-erythrose 4-phosphate and phosphoenolpyruvate: step 6/7. Catalyzes the transfer of the enolpyruvyl moiety of phosphoenolpyruvate (PEP) to the 5-hydroxyl of shikimate-3-phosphate (S3P) to produce enolpyruvyl shikimate-3-phosphate and inorganic phosphate. This Bacillus anthracis (strain A0248) protein is 3-phosphoshikimate 1-carboxyvinyltransferase.